Consider the following 79-residue polypeptide: Putative sulfur carrier protein TM_0983 (79 aa).

The Cysteine persulfide intermediate role is filled by Cys-17.

The protein belongs to the sulfur carrier protein TusA family.

The chain is Putative sulfur carrier protein TM_0983 from Thermotoga maritima (strain ATCC 43589 / DSM 3109 / JCM 10099 / NBRC 100826 / MSB8).